The primary structure comprises 600 residues: Oligopeptide-binding protein OppA (600 aa).

The first 22 residues, 1–22, serve as a signal peptide directing secretion; it reads MNKLKVTLLASSVVLAATLLSA. C23 carries the N-palmitoyl cysteine lipid modification. C23 is lipidated: S-diacylglycerol cysteine.

The protein belongs to the bacterial solute-binding protein 5 family. As to quaternary structure, the complex is composed of two ATP-binding proteins (OppD and OppF), two transmembrane proteins (OppB and OppC) and a solute-binding protein (OppA).

It is found in the cell membrane. Its function is as follows. Part of the ABC transporter complex OppABCDF involved in the uptake of oligopeptides. The chain is Oligopeptide-binding protein OppA from Lactococcus lactis subsp. cremoris (strain SK11).